The sequence spans 129 residues: Small ribosomal subunit protein uS11 (129 aa).

The protein belongs to the universal ribosomal protein uS11 family. In terms of assembly, part of the 30S ribosomal subunit. Interacts with proteins S7 and S18. Binds to IF-3.

Its function is as follows. Located on the platform of the 30S subunit, it bridges several disparate RNA helices of the 16S rRNA. Forms part of the Shine-Dalgarno cleft in the 70S ribosome. This Azorhizobium caulinodans (strain ATCC 43989 / DSM 5975 / JCM 20966 / LMG 6465 / NBRC 14845 / NCIMB 13405 / ORS 571) protein is Small ribosomal subunit protein uS11.